A 382-amino-acid polypeptide reads, in one-letter code: Putative acetyl-CoA C-acetyltransferase VraB (382 aa).

Residue Cys-86 is the Acyl-thioester intermediate of the active site. His-338 functions as the Proton acceptor in the catalytic mechanism.

The protein belongs to the thiolase-like superfamily. Thiolase family.

This is Putative acetyl-CoA C-acetyltransferase VraB (vraB) from Staphylococcus epidermidis (strain ATCC 35984 / DSM 28319 / BCRC 17069 / CCUG 31568 / BM 3577 / RP62A).